The primary structure comprises 290 residues: UPF0761 membrane protein YihY (290 aa).

6 consecutive transmembrane segments (helical) span residues 44 to 64 (LLSL…FPMF), 104 to 124 (VGAC…DSAL), 140 to 160 (FAVY…SLAI), 183 to 203 (IFPL…VPTI), 210 to 230 (AIVG…GFAL), and 244 to 264 (VLAV…IVLL).

It belongs to the UPF0761 family.

The protein resides in the cell inner membrane. The chain is UPF0761 membrane protein YihY from Escherichia coli O1:K1 / APEC.